A 96-amino-acid chain; its full sequence is Acylphosphatase (96 aa).

The region spanning 11–96 (ARRWYVRGRV…ITSYDSFRIR (86 aa)) is the Acylphosphatase-like domain. Active-site residues include Arg-26 and Asn-44.

It belongs to the acylphosphatase family.

The enzyme catalyses an acyl phosphate + H2O = a carboxylate + phosphate + H(+). The protein is Acylphosphatase (acyP) of Solibacter usitatus (strain Ellin6076).